Reading from the N-terminus, the 567-residue chain is Inactive protein kinase SELMODRAFT_444075 (567 aa).

Positions 148-206 (NETRRKGPSPSEVLNSTTSSPASHKPQVLNDFLRMKESREYTEETDTQRNVSRPVDRVS) are disordered. Polar residues predominate over residues 159–169 (EVLNSTTSSPA). Residues 180-189 (LRMKESREYT) are compositionally biased toward basic and acidic residues. The segment covering 196-206 (RNVSRPVDRVS) has biased composition (low complexity). A Protein kinase domain is found at 255-487 (FSDVNFLAEG…EGDSLSDTSL (233 aa)). ATP-binding positions include 261-269 (LAEGGYGSV) and Lys-283. Positions 511–538 (DSSSSRSSSASSVLKSFSRTQHSSRSSS) are enriched in low complexity. Residues 511–567 (DSSSSRSSSASSVLKSFSRTQHSSRSSSNAGSPLNPAATQALAFKKYNKNTTRHTQD) are disordered. A compositionally biased stretch (basic residues) spans 556 to 567 (KYNKNTTRHTQD).

In Selaginella moellendorffii (Spikemoss), this protein is Inactive protein kinase SELMODRAFT_444075.